The following is a 142-amino-acid chain: Putative pre-16S rRNA nuclease (142 aa).

Belongs to the YqgF nuclease family.

Its subcellular location is the cytoplasm. Its function is as follows. Could be a nuclease involved in processing of the 5'-end of pre-16S rRNA. This Staphylococcus aureus (strain JH1) protein is Putative pre-16S rRNA nuclease.